Reading from the N-terminus, the 446-residue chain is Beta-glucosidase A (446 aa).

Glu-166 serves as the catalytic Proton donor. Glu-351 (nucleophile) is an active-site residue.

It belongs to the glycosyl hydrolase 1 family.

The enzyme catalyses Hydrolysis of terminal, non-reducing beta-D-glucosyl residues with release of beta-D-glucose.. It functions in the pathway glycan metabolism; cellulose degradation. The protein is Beta-glucosidase A (bglA) of Thermotoga maritima (strain ATCC 43589 / DSM 3109 / JCM 10099 / NBRC 100826 / MSB8).